A 176-amino-acid polypeptide reads, in one-letter code: Glutathione-regulated potassium-efflux system ancillary protein KefF (176 aa).

Residues His8, 14 to 17 (SHAN), 65 to 68 (MQWY), and 105 to 108 (TTGG) contribute to the FMN site.

The protein belongs to the NAD(P)H dehydrogenase (quinone) family. KefF subfamily. Homodimer. Interacts with KefC. It depends on FMN as a cofactor.

Its subcellular location is the cell inner membrane. The enzyme catalyses a quinone + NADH + H(+) = a quinol + NAD(+). It catalyses the reaction a quinone + NADPH + H(+) = a quinol + NADP(+). In terms of biological role, regulatory subunit of a potassium efflux system that confers protection against electrophiles. Required for full activity of KefC. Shows redox enzymatic activity, but this enzymatic activity is not required for activation of KefC. The protein is Glutathione-regulated potassium-efflux system ancillary protein KefF of Salmonella dublin (strain CT_02021853).